We begin with the raw amino-acid sequence, 201 residues long: Small ribosomal subunit protein uS4 (201 aa).

A disordered region spans residues 26-47 (LSKKNYPPGQHGNNRRRKTSEY). An S4 RNA-binding domain is found at 92 to 154 (ARLDNVVFRL…SKSLEVIADA (63 aa)).

This sequence belongs to the universal ribosomal protein uS4 family. In terms of assembly, part of the 30S ribosomal subunit. Contacts protein S5. The interaction surface between S4 and S5 is involved in control of translational fidelity.

One of the primary rRNA binding proteins, it binds directly to 16S rRNA where it nucleates assembly of the body of the 30S subunit. Functionally, with S5 and S12 plays an important role in translational accuracy. The polypeptide is Small ribosomal subunit protein uS4 (Porphyromonas gingivalis (strain ATCC 33277 / DSM 20709 / CIP 103683 / JCM 12257 / NCTC 11834 / 2561)).